The sequence spans 99 residues: Large ribosomal subunit protein eL21 (99 aa).

Polar residues predominate over residues 1–14 (MPNSNGPLSNSGGK). The interval 1 to 38 (MPNSNGPLSNSGGKLQNDPRDRGTSPPQRAIADYDDGE) is disordered.

This sequence belongs to the eukaryotic ribosomal protein eL21 family.

The protein is Large ribosomal subunit protein eL21 of Halobacterium salinarum (strain ATCC 29341 / DSM 671 / R1).